A 529-amino-acid chain; its full sequence is ATP synthase F(1) complex catalytic subunit beta, mitochondrial (529 aa).

Residues 1 to 46 (MLSLVGRVASASASGALRGLSPSAALPQAQLLLRAAPAGVHPARDY) constitute a mitochondrion transit peptide. An O-linked (GlcNAc) serine glycan is attached at serine 106. N6-acetyllysine; alternate is present on residues lysine 124, lysine 133, and lysine 161. N6-succinyllysine; alternate occurs at positions 124, 133, and 161. Lysine 198 carries the post-translational modification N6-acetyllysine. Residues glycine 209, valine 210, glycine 211, lysine 212, threonine 213, and valine 214 each contribute to the ADP site. ATP is bound at residue glycine 209. 5 residues coordinate phosphate: glycine 209, valine 210, glycine 211, lysine 212, and threonine 213. Residues glycine 211, lysine 212, threonine 213, and valine 214 each contribute to the ATP site. Residue threonine 213 participates in Mg(2+) binding. Glutamate 238 contributes to the Mg(2+) binding site. Arginine 239 lines the ATP pocket. Lysine 259 and lysine 264 each carry N6-acetyllysine; alternate. N6-succinyllysine; alternate is present on residues lysine 259 and lysine 264. Residue threonine 312 is modified to Phosphothreonine. Residue lysine 426 is modified to N6-acetyllysine. Serine 433 is modified (phosphoserine). An N6-acetyllysine mark is found at lysine 480 and lysine 485. The residue at position 522 (lysine 522) is an N6-acetyllysine; alternate. Residue lysine 522 is modified to N6-succinyllysine; alternate. At serine 529 the chain carries Phosphoserine.

This sequence belongs to the ATPase alpha/beta chains family. Homotrimer. Component of the ATP synthase complex composed at least of ATP5F1A/subunit alpha, ATP5F1B/subunit beta, ATP5MC1/subunit c (homooctomer), MT-ATP6/subunit a, MT-ATP8/subunit 8, ATP5ME/subunit e, ATP5MF/subunit f, ATP5MG/subunit g, ATP5MK/subunit k, ATP5MJ/subunit j, ATP5F1C/subunit gamma, ATP5F1D/subunit delta, ATP5F1E/subunit epsilon, ATP5PF/subunit F6, ATP5PB/subunit b, ATP5PD/subunit d, ATP5PO/subunit OSCP. ATP synthase complex consists of a soluble F(1) head domain (subunits alpha(3) and beta(3)) - the catalytic core - and a membrane F(0) domain - the membrane proton channel (subunits c, a, 8, e, f, g, k and j). These two domains are linked by a central stalk (subunits gamma, delta, and epsilon) rotating inside the F1 region and a stationary peripheral stalk (subunits F6, b, d, and OSCP). Interacts with PPIF. Interacts with BCL2L1 isoform BCL-X(L); the interaction mediates the association of BCL2L1 isoform BCL-X(L) with the mitochondrial membrane F(1)F(0) ATP synthase and enhances neurons metabolic efficiency. Interacts with CLN5 and PPT1. Interacts with S100A1; this interaction increases F1-ATPase activity. Interacts with MTLN. Interacts with TTC5/STRAP; the interaction results in decreased mitochondrial ATP production. Acetylation of Lys-133 is observed in liver mitochondria from fasted mice but not from fed mice.

It is found in the mitochondrion inner membrane. The catalysed reaction is ATP + H2O + 4 H(+)(in) = ADP + phosphate + 5 H(+)(out). Its function is as follows. Catalytic subunit beta, of the mitochondrial membrane ATP synthase complex (F(1)F(0) ATP synthase or Complex V) that produces ATP from ADP in the presence of a proton gradient across the membrane which is generated by electron transport complexes of the respiratory chain. ATP synthase complex consist of a soluble F(1) head domain - the catalytic core - and a membrane F(1) domain - the membrane proton channel. These two domains are linked by a central stalk rotating inside the F(1) region and a stationary peripheral stalk. During catalysis, ATP synthesis in the catalytic domain of F(1) is coupled via a rotary mechanism of the central stalk subunits to proton translocation. In vivo, can only synthesize ATP although its ATP hydrolase activity can be activated artificially in vitro. With the subunit alpha (ATP5F1A), forms the catalytic core in the F(1) domain. This is ATP synthase F(1) complex catalytic subunit beta, mitochondrial from Mus musculus (Mouse).